The chain runs to 414 residues: Ferredoxin--NAD(P)(+) reductase fdr (414 aa).

7–38 (DVVIVGAGHGGAQTAIALRQNGFAGTIAIIGA) contributes to the FAD binding site. NAD(+) is bound at residue 149-177 (KVVIIGGGYIGLEAAAVMAKFGKNVTLIE).

Belongs to the FAD-dependent oxidoreductase family. In terms of assembly, monomer. Carbazole 1,9a-dioxygenase complex consists of a terminal oxygenase component CarAa, a ferredoxin reductase component fdr and a ferredoxin component CarAc. Requires FAD as cofactor.

The enzyme catalyses 2 reduced [2Fe-2S]-[ferredoxin] + NAD(+) + H(+) = 2 oxidized [2Fe-2S]-[ferredoxin] + NADH. It carries out the reaction 2 reduced [2Fe-2S]-[ferredoxin] + NADP(+) + H(+) = 2 oxidized [2Fe-2S]-[ferredoxin] + NADPH. Functionally, part of the multicomponent carbazole 1,9a-dioxygenase (CARDO), that converts carbazole (CAR) into 2-aminobiphenyl-2,3-diol. This Sphingomonas sp protein is Ferredoxin--NAD(P)(+) reductase fdr (fdr).